Consider the following 151-residue polypeptide: HTH-type transcriptional regulator FL11 (151 aa).

The region spanning 5-66 (LDDIDKKIIE…VVNPEALGYN (62 aa)) is the HTH asnC-type domain. The segment at residues 24-43 (LREISKITGLAESTIHERIK) is a DNA-binding region (H-T-H motif). Residue 98–104 (ETTGDYD) participates in L-arginine binding. Residues Asn-118, Asp-122, and 133–135 (THT) each bind L-lysine. L-arginine is bound by residues Asp-122 and 133–135 (THT).

As to quaternary structure, homodimer. Binds DNA as a dimer and an octamer.

In the famine mode, FL11 forms dimers and acts as a repressor, leading to growth arrest. In the feast mode, in the presence of high concentrations of lysine or arginine, four dimers assemble into an octamer and cover the fl11 and lysine biosynthesis promoters. This leads to the inhibition of fl11 expression and lysine biosynthesis, decrease of the FL11 concentration in the cell, derepression of the target genes and activation of the metabolism. Functionally, DNA-binding protein involved in the repression of transcription of a large number of genes, thereby arresting growth, in response to environmental changes. This Pyrococcus furiosus (strain ATCC 43587 / DSM 3638 / JCM 8422 / Vc1) protein is HTH-type transcriptional regulator FL11.